The primary structure comprises 550 residues: CTP synthase (550 aa).

The amidoligase domain stretch occupies residues 1 to 265 (MTKFIFVTGG…DEIVVEQLGL (265 aa)). Ser-13 is a binding site for CTP. Ser-13 provides a ligand contact to UTP. 14-19 (SLGKGI) contacts ATP. Tyr-54 contributes to the L-glutamine binding site. Asp-71 is an ATP binding site. Mg(2+) contacts are provided by Asp-71 and Glu-139. Residues 146 to 148 (DIE), 186 to 191 (KTKPTQ), and Lys-222 each bind CTP. UTP is bound by residues 186–191 (KTKPTQ) and Lys-222. In terms of domain architecture, Glutamine amidotransferase type-1 spans 290 to 541 (TITLVGKYVD…IRAAAEHRRR (252 aa)). Gly-351 serves as a coordination point for L-glutamine. Cys-378 functions as the Nucleophile; for glutamine hydrolysis in the catalytic mechanism. L-glutamine is bound by residues 379-382 (LGMQ), Glu-402, and Arg-469. Catalysis depends on residues His-514 and Glu-516.

The protein belongs to the CTP synthase family. Homotetramer.

It catalyses the reaction UTP + L-glutamine + ATP + H2O = CTP + L-glutamate + ADP + phosphate + 2 H(+). It carries out the reaction L-glutamine + H2O = L-glutamate + NH4(+). The enzyme catalyses UTP + NH4(+) + ATP = CTP + ADP + phosphate + 2 H(+). It participates in pyrimidine metabolism; CTP biosynthesis via de novo pathway; CTP from UDP: step 2/2. Allosterically activated by GTP, when glutamine is the substrate; GTP has no effect on the reaction when ammonia is the substrate. The allosteric effector GTP functions by stabilizing the protein conformation that binds the tetrahedral intermediate(s) formed during glutamine hydrolysis. Inhibited by the product CTP, via allosteric rather than competitive inhibition. Catalyzes the ATP-dependent amination of UTP to CTP with either L-glutamine or ammonia as the source of nitrogen. Regulates intracellular CTP levels through interactions with the four ribonucleotide triphosphates. The polypeptide is CTP synthase (Nitrosococcus oceani (strain ATCC 19707 / BCRC 17464 / JCM 30415 / NCIMB 11848 / C-107)).